Here is a 383-residue protein sequence, read N- to C-terminus: Microtubule-associated protein tau (383 aa).

Residues 1–27 (MAEPRQEFDVMEDHAGTYGLGDRKDQE) show a composition bias toward basic and acidic residues. A disordered region spans residues 1–198 (MAEPRQEFDV…PVPMPDLKNV (198 aa)). Position 2 is an N-acetylalanine (Ala2). Phosphotyrosine occurs at positions 18 and 29. Lys44 is covalently cross-linked (Glycyl lysine isopeptide (Lys-Gly) (interchain with G-Cter in ubiquitin)). A Phosphothreonine modification is found at Thr53. Over residues 72 to 91 (KSKDGTGSDDKKAKGADGKT) the composition is skewed to basic and acidic residues. Phosphothreonine is present on Thr95. At Arg97 the chain carries Omega-N-methylarginine. Lys105 is modified (N6,N6-dimethyllysine; alternate). Position 105 is an N6-acetyllysine; alternate (Lys105). Phosphothreonine is present on residues Thr111, Thr117, and Thr123. The segment covering 116 to 128 (KTPPAPKTPPSSG) has biased composition (pro residues). Ser127, Ser133, and Ser137 each carry phosphoserine. The segment covering 129–156 (EPPKSGDRSGYSSPGSPGTPGSRSRTPS) has biased composition (low complexity). A Phosphotyrosine modification is found at Tyr139. Residues Ser140, Ser141, and Ser144 each carry the phosphoserine modification. A phosphothreonine mark is found at Thr147 and Thr154. A Phosphoserine modification is found at Ser156. Phosphothreonine is present on Thr159. At Lys167 the chain carries N6-acetyllysine. Thr173 is subject to Phosphothreonine. Phosphoserine is present on residues Ser177 and Ser179. 4 Tau/MAP repeats span residues 186–216 (QTAPVPMPDLKNVKSKIGSTENLKHQPGGGK), 217–247 (VQIINKKLDLSNVQSKCGSKDNIKHVPGGGS), 248–278 (VQIVYKPVDLSKVTSKCGSLGNIHHKPGGGQ), and 279–310 (VEVKSEKLDFKDRVQSKIGSLDNITHVPGGGN). Lys196 participates in a covalent cross-link: Glycyl lysine isopeptide (Lys-Gly) (interchain with G-Cter in ubiquitin). Lys201 is modified (N6-acetyllysine; alternate). Lys201 is subject to N6-methyllysine; alternate. Lys201 participates in a covalent cross-link: Glycyl lysine isopeptide (Lys-Gly) (interchain with G-Cter in ubiquitin); alternate. The residue at position 204 (Ser204) is a Phosphoserine. Lys209 participates in a covalent cross-link: Glycyl lysine isopeptide (Lys-Gly) (interchain with G-Cter in ubiquitin). Position 223 is an N6-acetyllysine; alternate (Lys223). Lys223 participates in a covalent cross-link: Glycyl lysine isopeptide (Lys-Gly) (interchain with G-Cter in ubiquitin); alternate. Phosphoserine occurs at positions 227 and 231. N6-acetyllysine is present on Lys232. Cysteines 233 and 264 form a disulfide. At Ser235 the chain carries Phosphoserine. At Lys240 the chain carries N6-acetyllysine; alternate. A Glycyl lysine isopeptide (Lys-Gly) (interchain with G-Cter in ubiquitin); alternate cross-link involves residue Lys240. Ser247 is subject to Phosphoserine. Residue Lys253 is modified to N6,N6-dimethyllysine; alternate. Residues Lys253, Lys259, and Lys263 each carry the N6-acetyllysine; alternate modification. Residues Lys253, Lys259, and Lys263 each participate in a glycyl lysine isopeptide (Lys-Gly) (interchain with G-Cter in ubiquitin); alternate cross-link. Ser266 is modified (phosphoserine). Lys273, Lys285, and Lys289 each carry N6-acetyllysine; alternate. Residues Lys273, Lys285, and Lys289 each participate in a glycyl lysine isopeptide (Lys-Gly) (interchain with G-Cter in ubiquitin); alternate cross-link. Arg291 is modified (omega-N-methylarginine). Phosphoserine is present on Ser294. A Glycyl lysine isopeptide (Lys-Gly) (interchain with G-Cter in ubiquitin) cross-link involves residue Lys295. Ser298 bears the Phosphoserine mark. Lys311 is subject to N6-acetyllysine; alternate. Residue Lys311 forms a Glycyl lysine isopeptide (Lys-Gly) (interchain with G-Cter in ubiquitin); alternate linkage. A Glycyl lysine isopeptide (Lys-Gly) (interchain with G-Cter in ubiquitin) cross-link involves residue Lys317. The residue at position 327 (Lys327) is an N6-acetyllysine; alternate. A Glycyl lysine isopeptide (Lys-Gly) (interchain with G-Cter in ubiquitin); alternate cross-link involves residue Lys327. Tyr336 is subject to Phosphotyrosine. A phosphoserine mark is found at Ser338 and Ser342. Residues 340 to 359 (VVSGDTSPRHLSNVSSTGSI) form a disordered region. The span at 343 to 358 (GDTSPRHLSNVSSTGS) shows a compositional bias: polar residues. Thr345 carries the phosphothreonine modification. A phosphoserine mark is found at Ser346, Ser351, Ser358, and Ser364. A Phosphothreonine modification is found at Thr369.

As to quaternary structure, interacts with MARK1, MARK2, MARK3 and MARK4. Interacts with SQSTM1 when polyubiquitinated. Interacts with PSMC2 through SQSTM1. Interacts with FKBP4. Binds to CSNK1D. Interacts with SGK1. Interacts with PIN1. Interacts with LRRK2. Interacts with LRP1, leading to endocytosis; this interaction is reduced in the presence of LRPAP1/RAP. In terms of processing, polyubiquitinated. Requires functional TRAF6 and may provoke SQSTM1-dependent degradation by the proteasome. Post-translationally, phosphorylation at various serine and threonine residues in S-P or T-P motifs by proline-directed protein kinases (PDPK1, CDK1, CDK5, GSK3, MAPK) (a few sites per protein in interphase, more in mitosis), and at serine residues in K-X-G-S motifs by MAP/microtubule affinity-regulating kinase (MARK1, MARK2, MARK3 or MARK4), causing detachment from microtubules, and their disassembly. Phosphorylation at Ser-204 by BRSK1 and BRSK2 in neurons affects ability to bind microtubules and plays a role in neuron polarization. Phosphorylated by PHK. Dephosphorylation at several serine and threonine residues by the serine/threonine phosphatase PPP5C. As to expression, expressed in neurons.

The protein localises to the cytoplasm. It is found in the cytosol. Its subcellular location is the cell membrane. The protein resides in the cytoskeleton. It localises to the cell projection. The protein localises to the axon. It is found in the dendrite. Functionally, promotes microtubule assembly and stability, and might be involved in the establishment and maintenance of neuronal polarity. The C-terminus binds axonal microtubules while the N-terminus binds neural plasma membrane components, suggesting that tau functions as a linker protein between both. Axonal polarity is predetermined by tau localization (in the neuronal cell) in the domain of the cell body defined by the centrosome. This chain is Microtubule-associated protein tau (MAPT), found in Papio hamadryas (Hamadryas baboon).